Reading from the N-terminus, the 246-residue chain is Large ribosomal subunit protein uL30-like 1 (246 aa).

At Ser-54 the chain carries Phosphoserine.

This sequence belongs to the universal ribosomal protein uL30 family.

The protein is Large ribosomal subunit protein uL30-like 1 (RPL7L1) of Pongo abelii (Sumatran orangutan).